The primary structure comprises 251 residues: Methionine aminopeptidase (251 aa).

H77 contributes to the substrate binding site. 3 residues coordinate a divalent metal cation: D94, D105, and H169. H176 is a substrate binding site. Residues E202 and E233 each coordinate a divalent metal cation.

Belongs to the peptidase M24A family. Methionine aminopeptidase type 1 subfamily. As to quaternary structure, monomer. The cofactor is Co(2+). It depends on Zn(2+) as a cofactor. Requires Mn(2+) as cofactor. Fe(2+) is required as a cofactor.

It carries out the reaction Release of N-terminal amino acids, preferentially methionine, from peptides and arylamides.. Removes the N-terminal methionine from nascent proteins. The N-terminal methionine is often cleaved when the second residue in the primary sequence is small and uncharged (Met-Ala-, Cys, Gly, Pro, Ser, Thr, or Val). Requires deformylation of the N(alpha)-formylated initiator methionine before it can be hydrolyzed. The protein is Methionine aminopeptidase of Mycoplasma capricolum subsp. capricolum (strain California kid / ATCC 27343 / NCTC 10154).